Consider the following 138-residue polypeptide: Small ribosomal subunit protein uS12 (138 aa).

The residue at position 89 (D89) is a 3-methylthioaspartic acid. The disordered stretch occupies residues 107-138; sequence VSGRMQRRSKYGAKFPKTGTGKTKAVPTKNKK.

Belongs to the universal ribosomal protein uS12 family. In terms of assembly, part of the 30S ribosomal subunit. Contacts proteins S8 and S17. May interact with IF1 in the 30S initiation complex.

In terms of biological role, with S4 and S5 plays an important role in translational accuracy. Its function is as follows. Interacts with and stabilizes bases of the 16S rRNA that are involved in tRNA selection in the A site and with the mRNA backbone. Located at the interface of the 30S and 50S subunits, it traverses the body of the 30S subunit contacting proteins on the other side and probably holding the rRNA structure together. The combined cluster of proteins S8, S12 and S17 appears to hold together the shoulder and platform of the 30S subunit. The sequence is that of Small ribosomal subunit protein uS12 from Azobacteroides pseudotrichonymphae genomovar. CFP2.